The sequence spans 188 residues: Fructose-1-phosphate phosphatase YqaB (188 aa).

The Nucleophile role is filled by D11. D11, D13, and D167 together coordinate Mg(2+). 11 to 13 serves as a coordination point for substrate; sequence DMD.

The protein belongs to the HAD-like hydrolase superfamily. CbbY/CbbZ/Gph/YieH family. The cofactor is Mg(2+). It depends on Mn(2+) as a cofactor. Requires Co(2+) as cofactor. Zn(2+) serves as cofactor.

Its function is as follows. Catalyzes strongly the dephosphorylation of fructose-1-phosphate (Fru1P) and slightly the dephosphorylation of 6-phosphogluconate (6P-Glu). It has low beta-phosphoglucomutase activity. The polypeptide is Fructose-1-phosphate phosphatase YqaB (yqaB) (Escherichia coli (strain K12)).